Here is a 530-residue protein sequence, read N- to C-terminus: Type 2 DNA topoisomerase 6 subunit B (530 aa).

ATP contacts are provided by residues Asn42, Asp76, 96–98, 107–113, and Lys427; these read SSK and MYGLGVK.

The protein belongs to the TOP6B family. In terms of assembly, homodimer. Heterotetramer of two Top6A and two Top6B chains.

The catalysed reaction is ATP-dependent breakage, passage and rejoining of double-stranded DNA.. Not inhibited by the DNA gyrase inhibitor novobiocin, instead inhibited by eukaryotic topoisomerase inhibitors such as m- and o-amsacrine, ellipticine, and the quinolone CP-115,953. Radicicol inhibits the ATPase activity. Its function is as follows. Relaxes both positive and negative supercoils and exhibits a strong decatenase and unknotting activity; it cannot introduce DNA supercoils. ATP is absolutely required for DNA cleavage; the nonhydrolyzable analog AMP-PNP generates nicked or linear products from a supercoiled dsDNA substrate. Generates staggered two-nucleotide long 5' overhangs. The enzyme is covalently attached transiently to the 5'-ends of the cleaved strands. The chain is Type 2 DNA topoisomerase 6 subunit B from Saccharolobus shibatae (strain ATCC 51178 / DSM 5389 / JCM 8931 / NBRC 15437 / B12) (Sulfolobus shibatae).